We begin with the raw amino-acid sequence, 128 residues long: uncharacterized protein (128 aa).

One can recognise a VOC domain in the interval methionine 1 to proline 126.

This is an uncharacterized protein from Bacillus subtilis (strain 168).